A 436-amino-acid polypeptide reads, in one-letter code: Gamma-glutamyl phosphate reductase (436 aa).

This sequence belongs to the gamma-glutamyl phosphate reductase family.

Its subcellular location is the cytoplasm. It carries out the reaction L-glutamate 5-semialdehyde + phosphate + NADP(+) = L-glutamyl 5-phosphate + NADPH + H(+). It participates in amino-acid biosynthesis; L-proline biosynthesis; L-glutamate 5-semialdehyde from L-glutamate: step 2/2. In terms of biological role, catalyzes the NADPH-dependent reduction of L-glutamate 5-phosphate into L-glutamate 5-semialdehyde and phosphate. The product spontaneously undergoes cyclization to form 1-pyrroline-5-carboxylate. This is Gamma-glutamyl phosphate reductase from Prochlorococcus marinus (strain MIT 9301).